Here is a 295-residue protein sequence, read N- to C-terminus: MTQRKGIILAGGSGTRLYPITKGVSKQLLPVYDKPMIYYPLSVLMLAGIRDILIINTPHEQALFQSLLGDGAQWGVNIQYAVQPSPDGLAQAYLIGRDFVGGKPSCLVLGDNIFHGHGLTDTLRRADAREQGATVFGYWVNDPERYGVAEFDQHGKVIDIAEKPEKPRSNYAVTGLYFYDGKASDYAAALKPSPRGELEITDLNRCYLDAGDLHLEPLGRGYAWLDTGTHQSLHEAANFIETIQMRQGLQVCCPEEIAFGQGWIDAEQLERLAAPLLKNDYGKYLTALAKRGAVH.

Mg(2+) contacts are provided by aspartate 111 and aspartate 226.

The protein belongs to the glucose-1-phosphate thymidylyltransferase family. In terms of assembly, homotetramer. It depends on Mg(2+) as a cofactor.

It catalyses the reaction dTTP + alpha-D-glucose 1-phosphate + H(+) = dTDP-alpha-D-glucose + diphosphate. Its pathway is carbohydrate biosynthesis; dTDP-L-rhamnose biosynthesis. It functions in the pathway bacterial outer membrane biogenesis; LPS O-antigen biosynthesis. In terms of biological role, catalyzes the formation of dTDP-glucose, from dTTP and glucose 1-phosphate, as well as its pyrophosphorolysis. This Xanthomonas campestris pv. campestris (strain B100) protein is Glucose-1-phosphate thymidylyltransferase (rmlA).